Reading from the N-terminus, the 135-residue chain is Large ribosomal subunit protein uL16c (135 aa).

Basic residues predominate over residues 1 to 17 (MLSPKRTRFRKQHRGRM). The disordered stretch occupies residues 1-21 (MLSPKRTRFRKQHRGRMKGVS).

It belongs to the universal ribosomal protein uL16 family. Part of the 50S ribosomal subunit.

The protein resides in the plastid. It is found in the chloroplast. The sequence is that of Large ribosomal subunit protein uL16c from Amborella trichopoda.